The following is a 405-amino-acid chain: Tryptophan synthase beta chain (405 aa).

The residue at position 98 (K98) is an N6-(pyridoxal phosphate)lysine.

Belongs to the TrpB family. As to quaternary structure, tetramer of two alpha and two beta chains. Pyridoxal 5'-phosphate serves as cofactor.

It carries out the reaction (1S,2R)-1-C-(indol-3-yl)glycerol 3-phosphate + L-serine = D-glyceraldehyde 3-phosphate + L-tryptophan + H2O. Its pathway is amino-acid biosynthesis; L-tryptophan biosynthesis; L-tryptophan from chorismate: step 5/5. The beta subunit is responsible for the synthesis of L-tryptophan from indole and L-serine. In Xanthomonas oryzae pv. oryzae (strain MAFF 311018), this protein is Tryptophan synthase beta chain.